Here is a 138-residue protein sequence, read N- to C-terminus: Acidic phospholipase A2 2 (138 aa).

Residues 1–16 (MRTLWIVAVLLLGVEG) form the signal peptide. 7 disulfides stabilise this stretch: Cys-42/Cys-131, Cys-44/Cys-60, Cys-59/Cys-111, Cys-65/Cys-138, Cys-66/Cys-104, Cys-73/Cys-97, and Cys-91/Cys-102. Ca(2+)-binding residues include Tyr-43, Gly-45, and Gly-47. The active site involves His-63. Asp-64 is a Ca(2+) binding site. Asp-105 is a catalytic residue.

This sequence belongs to the phospholipase A2 family. Group II subfamily. D49 sub-subfamily. It depends on Ca(2+) as a cofactor. As to expression, expressed by the venom gland.

It is found in the secreted. It carries out the reaction a 1,2-diacyl-sn-glycero-3-phosphocholine + H2O = a 1-acyl-sn-glycero-3-phosphocholine + a fatty acid + H(+). Snake venom phospholipase A2 (PLA2) that displays edema-inducing activities, exhibits indirect hemolytic activity, and inhibits ADP-induced platelet aggregation. PLA2 catalyzes the calcium-dependent hydrolysis of the 2-acyl groups in 3-sn-phosphoglycerides. In Protobothrops mucrosquamatus (Taiwan habu), this protein is Acidic phospholipase A2 2.